The following is a 130-amino-acid chain: MSMQDPIADMLTRIRNGQAANKAAVTMPSSKLKVAIANVLKEEGFIEDFKVEGDTKPELELTLKYFQGKAVVESIQRVSRPGLRIYKKKDELPKVMAGLGIAVISTSKGVMTDRAARQAGLGGEIICYVA.

Belongs to the universal ribosomal protein uS8 family. As to quaternary structure, part of the 30S ribosomal subunit. Contacts proteins S5 and S12.

Its function is as follows. One of the primary rRNA binding proteins, it binds directly to 16S rRNA central domain where it helps coordinate assembly of the platform of the 30S subunit. This Cronobacter sakazakii (strain ATCC BAA-894) (Enterobacter sakazakii) protein is Small ribosomal subunit protein uS8.